We begin with the raw amino-acid sequence, 278 residues long: NAD kinase (278 aa).

Aspartate 56 (proton acceptor) is an active-site residue. NAD(+) is bound by residues 56–57 (DG), 132–133 (NE), arginine 158, aspartate 160, and 171–176 (TAYNKS).

This sequence belongs to the NAD kinase family. The cofactor is a divalent metal cation.

The protein localises to the cytoplasm. It carries out the reaction NAD(+) + ATP = ADP + NADP(+) + H(+). Its function is as follows. Involved in the regulation of the intracellular balance of NAD and NADP, and is a key enzyme in the biosynthesis of NADP. Catalyzes specifically the phosphorylation on 2'-hydroxyl of the adenosine moiety of NAD to yield NADP. The sequence is that of NAD kinase from Streptococcus agalactiae serotype V (strain ATCC BAA-611 / 2603 V/R).